Reading from the N-terminus, the 175-residue chain is MPLRPARCYKRIKRPYTRLKYIHGAPYVQIPRFEMGATKAKDRERFTSVAVLRVLEGGQIRVNALEAARQMAYKYLSKVLTDQNFYLKIIKYPHHVIRENKMLAMAGADRLQEGMRLAFGVPTGRAIQIEPGEVLMIVEVEDRNITHAKEALNRARAKLPLPCRIELTRKSVIKG.

The protein belongs to the universal ribosomal protein uL16 family.

The sequence is that of Large ribosomal subunit protein uL16 from Caldivirga maquilingensis (strain ATCC 700844 / DSM 13496 / JCM 10307 / IC-167).